The following is a 146-amino-acid chain: Large ribosomal subunit protein uL15 (146 aa).

The span at methionine 1 to arginine 13 shows a compositional bias: basic and acidic residues. The interval methionine 1–leucine 48 is disordered. The span at arginine 21 to alanine 31 shows a compositional bias: gly residues.

The protein belongs to the universal ribosomal protein uL15 family. In terms of assembly, part of the 50S ribosomal subunit.

Functionally, binds to the 23S rRNA. The chain is Large ribosomal subunit protein uL15 from Bacillus cytotoxicus (strain DSM 22905 / CIP 110041 / 391-98 / NVH 391-98).